The sequence spans 305 residues: Ribonuclease Z (305 aa).

Zn(2+) contacts are provided by histidine 61, histidine 63, aspartate 65, histidine 66, histidine 138, aspartate 208, and histidine 266. Aspartate 65 (proton acceptor) is an active-site residue.

The protein belongs to the RNase Z family. Homodimer. It depends on Zn(2+) as a cofactor.

The catalysed reaction is Endonucleolytic cleavage of RNA, removing extra 3' nucleotides from tRNA precursor, generating 3' termini of tRNAs. A 3'-hydroxy group is left at the tRNA terminus and a 5'-phosphoryl group is left at the trailer molecule.. Functionally, zinc phosphodiesterase, which displays some tRNA 3'-processing endonuclease activity. Probably involved in tRNA maturation, by removing a 3'-trailer from precursor tRNA. The chain is Ribonuclease Z from Methanosarcina acetivorans (strain ATCC 35395 / DSM 2834 / JCM 12185 / C2A).